Here is a 754-residue protein sequence, read N- to C-terminus: Ribosomal RNA large subunit methyltransferase K/L (754 aa).

Residues 46-157 (TAYRLCLWSR…RGEAILSLDL (112 aa)) form the THUMP domain.

This sequence belongs to the methyltransferase superfamily. RlmKL family.

The protein resides in the cytoplasm. It carries out the reaction guanosine(2445) in 23S rRNA + S-adenosyl-L-methionine = N(2)-methylguanosine(2445) in 23S rRNA + S-adenosyl-L-homocysteine + H(+). The catalysed reaction is guanosine(2069) in 23S rRNA + S-adenosyl-L-methionine = N(2)-methylguanosine(2069) in 23S rRNA + S-adenosyl-L-homocysteine + H(+). In terms of biological role, specifically methylates the guanine in position 2445 (m2G2445) and the guanine in position 2069 (m7G2069) of 23S rRNA. This Pseudomonas fluorescens (strain ATCC BAA-477 / NRRL B-23932 / Pf-5) protein is Ribosomal RNA large subunit methyltransferase K/L.